A 197-amino-acid chain; its full sequence is Guanylate kinase (197 aa).

One can recognise a Guanylate kinase-like domain in the interval 7 to 185 (GLIIILSSPS…TLKKIHEIIV (179 aa)). ATP is bound at residue 14–21 (SPSGTGKS).

Belongs to the guanylate kinase family.

It localises to the cytoplasm. It carries out the reaction GMP + ATP = GDP + ADP. Essential for recycling GMP and indirectly, cGMP. The protein is Guanylate kinase of Rickettsia typhi (strain ATCC VR-144 / Wilmington).